Consider the following 157-residue polypeptide: Endoribonuclease YbeY (157 aa).

Residues His114, His118, and His124 each coordinate Zn(2+).

Belongs to the endoribonuclease YbeY family. The cofactor is Zn(2+).

The protein resides in the cytoplasm. Its function is as follows. Single strand-specific metallo-endoribonuclease involved in late-stage 70S ribosome quality control and in maturation of the 3' terminus of the 16S rRNA. This chain is Endoribonuclease YbeY, found in Salmonella dublin (strain CT_02021853).